The sequence spans 93 residues: MMPNIICLKAVISGKVQGVGYRYSTRAKAQSLGLVGWVRNLPDGRVEAMAEGERTQVDKLIEWFKQGPPAAEVSKVDVDEESLGEFRAFEILR.

The region spanning 7–93 is the Acylphosphatase-like domain; it reads CLKAVISGKV…GEFRAFEILR (87 aa). Catalysis depends on residues Arg-22 and Asn-40.

The protein belongs to the acylphosphatase family.

The enzyme catalyses an acyl phosphate + H2O = a carboxylate + phosphate + H(+). This chain is Acylphosphatase (acyP), found in Acaryochloris marina (strain MBIC 11017).